The chain runs to 56 residues: Large ribosomal subunit protein bL33 (56 aa).

Belongs to the bacterial ribosomal protein bL33 family.

This chain is Large ribosomal subunit protein bL33, found in Nocardioides sp. (strain ATCC BAA-499 / JS614).